A 467-amino-acid polypeptide reads, in one-letter code: uncharacterized protein (467 aa).

The segment at 1–60 is disordered; the sequence is MVRVSRGCQSCVDAKLQSTPSPSPSKSPSPTESPEQCLQKRQSGEQVVLPSRPFPRTSPR.

In terms of biological role, involved in osmoadaptation. This is an uncharacterized protein from Emericella nidulans (strain FGSC A4 / ATCC 38163 / CBS 112.46 / NRRL 194 / M139) (Aspergillus nidulans).